The following is a 305-amino-acid chain: Cytochrome c biogenesis protein CcsA (305 aa).

8 helical membrane-spanning segments follow: residues 13–33 (IYFS…VYPV), 42–62 (KGII…WFYS), 70–90 (LYES…FIDI), 97–117 (WIGV…TLIL), 135–155 (WLIM…CGSL), 212–232 (YTIV…AVWA), 242–262 (WDPK…YIHI), and 276–296 (VASL…ILGI).

It belongs to the CcmF/CycK/Ccl1/NrfE/CcsA family. As to quaternary structure, may interact with Ccs1.

Its subcellular location is the plastid. It localises to the chloroplast thylakoid membrane. Functionally, required during biogenesis of c-type cytochromes (cytochrome c6 and cytochrome f) at the step of heme attachment. In Welwitschia mirabilis (Tree tumbo), this protein is Cytochrome c biogenesis protein CcsA.